The sequence spans 121 residues: MKLCITSLKNQKEFELINKLGEKFYERYFILVIAKKLPKIFLESKYNTFLGIKVSRKLNKKAVVRNKIKRRIRHLMRIIVNDSNFKAIKFAIIIIPKKGFEEINFSHLQYELSKIILRNIY.

It belongs to the RnpA family. In terms of assembly, consists of a catalytic RNA component (M1 or rnpB) and a protein subunit.

The catalysed reaction is Endonucleolytic cleavage of RNA, removing 5'-extranucleotides from tRNA precursor.. RNaseP catalyzes the removal of the 5'-leader sequence from pre-tRNA to produce the mature 5'-terminus. It can also cleave other RNA substrates such as 4.5S RNA. The protein component plays an auxiliary but essential role in vivo by binding to the 5'-leader sequence and broadening the substrate specificity of the ribozyme. The sequence is that of Ribonuclease P protein component from Rickettsia prowazekii (strain Madrid E).